Consider the following 593-residue polypeptide: Cyclin-dependent kinase-like 3 (593 aa).

One can recognise a Protein kinase domain in the interval 4 to 286; it reads YETLGKVGEG…STDLLHHDYF (283 aa). ATP is bound by residues 10-18 and Lys-33; that span reads VGEGSYGTV. A [NKR]KIAxRE motif is present at residues 45-51; it reads KIATREI. Asp-125 functions as the Proton acceptor in the catalytic mechanism. A Phosphothreonine modification is found at Thr-158. Tyr-160 carries the post-translational modification Phosphotyrosine. Residues 368–403 show a composition bias toward basic and acidic residues; the sequence is GKGDVPDLKKTESEGEHRQQGTAEDTHPTSLDRKPS. A disordered region spans residues 368–512; the sequence is GKGDVPDLKK…NDQIASGNKR (145 aa). A compositionally biased stretch (low complexity) spans 436 to 452; the sequence is NLTSSNLLAANPSSNLS. Polar residues-rich tracts occupy residues 468–491 and 499–508; these read SSQTIGQTLSNSRQEDTGPTQVQT and RTGQNDQIAS.

The protein belongs to the protein kinase superfamily. CMGC Ser/Thr protein kinase family. CDC2/CDKX subfamily. Highly expressed in brain, and to a lower extent in heart and testis.

Its subcellular location is the nucleus. It localises to the cytoplasm. It catalyses the reaction L-seryl-[protein] + ATP = O-phospho-L-seryl-[protein] + ADP + H(+). It carries out the reaction L-threonyl-[protein] + ATP = O-phospho-L-threonyl-[protein] + ADP + H(+). This is Cyclin-dependent kinase-like 3 from Rattus norvegicus (Rat).